The following is a 202-amino-acid chain: uncharacterized protein (202 aa).

This is an uncharacterized protein from Pseudanabaena tenuis (strain PCC 7409).